Here is a 1136-residue protein sequence, read N- to C-terminus: Carbamoyl phosphate synthase large chain (1136 aa).

The tract at residues 1–402 is carboxyphosphate synthetic domain; the sequence is MPKRTDIKSV…SLGKAMRSID (402 aa). Positions 129, 169, 175, 176, 208, 210, 215, 241, 242, 243, 285, and 299 each coordinate ATP. Residues 133–328 enclose the ATP-grasp 1 domain; it reads KKVVKEAGAE…IAKIATKLAL (196 aa). Mg(2+) is bound by residues Q285, E299, and N301. Mn(2+) contacts are provided by Q285, E299, and N301. Residues 403-551 are oligomerization domain; it reads KRHMGFSWDG…YYYSCYADET (149 aa). The carbamoyl phosphate synthetic domain stretch occupies residues 552–962; it reads ELRKREREAV…AFAKSQLASY (411 aa). The region spanning 681–881 is the ATP-grasp 2 domain; the sequence is GEVLRQEHLN…LAKAAARIMA (201 aa). ATP contacts are provided by R717, K765, L767, E772, G797, V798, H799, S800, Q840, and E852. Mg(2+)-binding residues include Q840, E852, and N854. Mn(2+) contacts are provided by Q840, E852, and N854. The interval 963–1136 is allosteric domain; sequence EGGLPTNGNV…KEEGEEARAQ (174 aa). One can recognise an MGS-like domain in the interval 964–1122; sequence GGLPTNGNVF…QEHSRELYEL (159 aa).

The protein belongs to the CarB family. In terms of assembly, composed of two chains; the small (or glutamine) chain promotes the hydrolysis of glutamine to ammonia, which is used by the large (or ammonia) chain to synthesize carbamoyl phosphate. Tetramer of heterodimers (alpha,beta)4. Mg(2+) is required as a cofactor. Requires Mn(2+) as cofactor.

The enzyme catalyses hydrogencarbonate + L-glutamine + 2 ATP + H2O = carbamoyl phosphate + L-glutamate + 2 ADP + phosphate + 2 H(+). It catalyses the reaction hydrogencarbonate + NH4(+) + 2 ATP = carbamoyl phosphate + 2 ADP + phosphate + 2 H(+). The protein operates within amino-acid biosynthesis; L-arginine biosynthesis; carbamoyl phosphate from bicarbonate: step 1/1. Its pathway is pyrimidine metabolism; UMP biosynthesis via de novo pathway; (S)-dihydroorotate from bicarbonate: step 1/3. Its function is as follows. Large subunit of the glutamine-dependent carbamoyl phosphate synthetase (CPSase). CPSase catalyzes the formation of carbamoyl phosphate from the ammonia moiety of glutamine, carbonate, and phosphate donated by ATP, constituting the first step of 2 biosynthetic pathways, one leading to arginine and/or urea and the other to pyrimidine nucleotides. The large subunit (synthetase) binds the substrates ammonia (free or transferred from glutamine from the small subunit), hydrogencarbonate and ATP and carries out an ATP-coupled ligase reaction, activating hydrogencarbonate by forming carboxy phosphate which reacts with ammonia to form carbamoyl phosphate. This Bifidobacterium animalis subsp. lactis (strain AD011) protein is Carbamoyl phosphate synthase large chain.